The sequence spans 241 residues: Enolase-phosphatase E1 (241 aa).

Residues aspartate 9 and glutamate 11 each contribute to the Mg(2+) site. Substrate contacts are provided by residues 133-134 (SS) and lysine 172. Aspartate 198 serves as a coordination point for Mg(2+).

This sequence belongs to the HAD-like hydrolase superfamily. MasA/MtnC family. Monomer. Requires Mg(2+) as cofactor.

Its subcellular location is the cytoplasm. It is found in the nucleus. It catalyses the reaction 5-methylsulfanyl-2,3-dioxopentyl phosphate + H2O = 1,2-dihydroxy-5-(methylsulfanyl)pent-1-en-3-one + phosphate. Its pathway is amino-acid biosynthesis; L-methionine biosynthesis via salvage pathway; L-methionine from S-methyl-5-thio-alpha-D-ribose 1-phosphate: step 3/6. The protein operates within amino-acid biosynthesis; L-methionine biosynthesis via salvage pathway; L-methionine from S-methyl-5-thio-alpha-D-ribose 1-phosphate: step 4/6. Functionally, bifunctional enzyme that catalyzes the enolization of 2,3-diketo-5-methylthiopentyl-1-phosphate (DK-MTP-1-P) into the intermediate 2-hydroxy-3-keto-5-methylthiopentenyl-1-phosphate (HK-MTPenyl-1-P), which is then dephosphorylated to form the acireductone 1,2-dihydroxy-3-keto-5-methylthiopentene (DHK-MTPene). The protein is Enolase-phosphatase E1 of Scheffersomyces stipitis (strain ATCC 58785 / CBS 6054 / NBRC 10063 / NRRL Y-11545) (Yeast).